We begin with the raw amino-acid sequence, 73 residues long: UPF0435 protein Lm4b_01721 (73 aa).

It belongs to the UPF0435 family.

In Listeria monocytogenes serotype 4b (strain CLIP80459), this protein is UPF0435 protein Lm4b_01721.